Reading from the N-terminus, the 377-residue chain is Nitric oxide reductase FlRd-NAD(+) reductase (377 aa).

The protein belongs to the FAD-dependent oxidoreductase family. It depends on FAD as a cofactor.

Its subcellular location is the cytoplasm. The enzyme catalyses 2 reduced [nitric oxide reductase rubredoxin domain] + NAD(+) + H(+) = 2 oxidized [nitric oxide reductase rubredoxin domain] + NADH. It functions in the pathway nitrogen metabolism; nitric oxide reduction. One of at least two accessory proteins for anaerobic nitric oxide (NO) reductase. Reduces the rubredoxin moiety of NO reductase. This Klebsiella pneumoniae (strain 342) protein is Nitric oxide reductase FlRd-NAD(+) reductase.